We begin with the raw amino-acid sequence, 403 residues long: Argininosuccinate synthase (403 aa).

ATP contacts are provided by residues 10-18 and Ala-38; that span reads AYSGGVDTS. Residue Tyr-89 participates in L-citrulline binding. Gly-119 provides a ligand contact to ATP. Residues Thr-121, Asn-125, and Asp-126 each contribute to the L-aspartate site. Asn-125 contacts L-citrulline. Residues Arg-129, Ser-177, Ser-186, Glu-262, and Tyr-274 each coordinate L-citrulline.

The protein belongs to the argininosuccinate synthase family. Type 1 subfamily. As to quaternary structure, homotetramer.

It localises to the cytoplasm. It carries out the reaction L-citrulline + L-aspartate + ATP = 2-(N(omega)-L-arginino)succinate + AMP + diphosphate + H(+). Its pathway is amino-acid biosynthesis; L-arginine biosynthesis; L-arginine from L-ornithine and carbamoyl phosphate: step 2/3. This Parasynechococcus marenigrum (strain WH8102) protein is Argininosuccinate synthase.